A 265-amino-acid polypeptide reads, in one-letter code: Glutamate racemase (265 aa).

Substrate-binding positions include 12 to 13 and 44 to 45; these read DS and YG. C75 serves as the catalytic Proton donor/acceptor. 76–77 contributes to the substrate binding site; it reads NT. C186 serves as the catalytic Proton donor/acceptor. Position 187 to 188 (187 to 188) interacts with substrate; that stretch reads TH.

The protein belongs to the aspartate/glutamate racemases family.

The catalysed reaction is L-glutamate = D-glutamate. The protein operates within cell wall biogenesis; peptidoglycan biosynthesis. Provides the (R)-glutamate required for cell wall biosynthesis. The sequence is that of Glutamate racemase from Pseudomonas entomophila (strain L48).